The chain runs to 678 residues: NADPH--cytochrome P450 reductase (678 aa).

Residues 1–21 are Lumenal-facing; it reads MADSNMDAGTTTSEMVAEEVS. A helical membrane pass occupies residues 22 to 42; that stretch reads LFSTTDVILFSLIVGVMTYWF. Residues 43-678 lie on the Cytoplasmic side of the membrane; sequence LFRKKKEEVP…KGRYSLDVWS (636 aa). Residue Ser63 is modified to Phosphoserine. The region spanning 80 to 224 is the Flavodoxin-like domain; that stretch reads IIVFYGSQTG…DFITWREQFW (145 aa). Residues 86–91, 138–141, 173–182, and Asp208 contribute to the FMN site; these read SQTGTA, ATYG, and LGNKTYEHFN. The FAD-binding FR-type domain occupies 279-521; the sequence is KNPFLAVVTT…YVRKSQFRLP (243 aa). Position 298 (Arg298) interacts with NADP(+). FAD-binding positions include Arg424, 454 to 457, 472 to 474, Tyr478, and 488 to 491; these read RYYS, CAV, and GVAT. NADP(+) is bound by residues Thr535, 596–597, 602–606, and Asp639; these read SR and KVYVQ. Residue Trp677 coordinates FAD.

Belongs to the NADPH--cytochrome P450 reductase family. It in the N-terminal section; belongs to the flavodoxin family. The protein in the C-terminal section; belongs to the flavoprotein pyridine nucleotide cytochrome reductase family. FAD is required as a cofactor. The cofactor is FMN.

It is found in the endoplasmic reticulum membrane. It catalyses the reaction 2 oxidized [cytochrome P450] + NADPH = 2 reduced [cytochrome P450] + NADP(+) + H(+). Functionally, this enzyme is required for electron transfer from NADP to cytochrome P450 in microsomes. It can also provide electron transfer to heme oxygenase and cytochrome B5. This is NADPH--cytochrome P450 reductase from Bos taurus (Bovine).